A 104-amino-acid polypeptide reads, in one-letter code: Synaptic plasticity regulator PANTS (104 aa).

A disordered region spans residues 58 to 104 (RRSAEAQADSLPPGPEGEPRVAGAGPNAVTGILTRNQGTERPHGDTR). Basic and acidic residues predominate over residues 95-104 (GTERPHGDTR).

The protein belongs to the UPF0545 family. As to quaternary structure, interacts with RTN4 isoform A/Nogo-A; the interaction results in enhanced RTN4-mediated inhibition of AMPA receptor clustering. Also interacts with NCAM1, RANBP2 and CCT8. Rapidly degraded by proteolysis following neuronal stimulation, resulting in increased AMPA receptor clustering.

The protein resides in the synapse. It localises to the synaptic cleft. Functionally, negatively regulates long-term potentiation and modulates adult synaptic plasticity. Stabilizes the interaction of RTN4 isoform A/Nogo-A with its receptors, inhibiting clustering of postsynaptic AMPA receptors at synaptic sites. Upon neuronal stimulation, degraded at synapses, reducing RTN4 signaling and allowing AMPA receptor clustering at individual synapses. This Bos taurus (Bovine) protein is Synaptic plasticity regulator PANTS.